The chain runs to 271 residues: Tryptophan synthase alpha chain (271 aa).

Active-site proton acceptor residues include E49 and D60.

This sequence belongs to the TrpA family. As to quaternary structure, tetramer of two alpha and two beta chains.

The enzyme catalyses (1S,2R)-1-C-(indol-3-yl)glycerol 3-phosphate + L-serine = D-glyceraldehyde 3-phosphate + L-tryptophan + H2O. It participates in amino-acid biosynthesis; L-tryptophan biosynthesis; L-tryptophan from chorismate: step 5/5. Its function is as follows. The alpha subunit is responsible for the aldol cleavage of indoleglycerol phosphate to indole and glyceraldehyde 3-phosphate. This is Tryptophan synthase alpha chain from Paraburkholderia phymatum (strain DSM 17167 / CIP 108236 / LMG 21445 / STM815) (Burkholderia phymatum).